Reading from the N-terminus, the 166-residue chain is Outer membrane protein assembly factor BamE (166 aa).

Residues 1-18 (MKRTVFPLAVAAALTLTA) form the signal peptide. Residue Cys-19 is the site of N-palmitoyl cysteine attachment. Residue Cys-19 is the site of S-diacylglycerol cysteine attachment. The segment at 143-166 (LFSNDDSGEMPVKPESKPSDLLNE) is disordered.

This sequence belongs to the BamE family. Part of the Bam complex.

Its subcellular location is the cell outer membrane. Functionally, part of the outer membrane protein assembly complex, which is involved in assembly and insertion of beta-barrel proteins into the outer membrane. This chain is Outer membrane protein assembly factor BamE, found in Methylomonas methanica (strain DSM 25384 / MC09).